An 843-amino-acid chain; its full sequence is Protein translocase subunit SecA 1 (843 aa).

Residues Gln-91, Gly-109–Thr-113, and Asp-498 each bind ATP. Over residues Glu-799–Lys-813 the composition is skewed to basic and acidic residues. Positions Glu-799–Asn-826 are disordered. Residues Cys-829, Cys-831, Cys-840, and His-841 each contribute to the Zn(2+) site.

It belongs to the SecA family. As to quaternary structure, monomer and homodimer. Part of the essential Sec protein translocation apparatus which comprises SecA, SecYEG and auxiliary proteins SecDF. Other proteins may also be involved. Requires Zn(2+) as cofactor.

It localises to the cell membrane. Its subcellular location is the cytoplasm. The catalysed reaction is ATP + H2O + cellular proteinSide 1 = ADP + phosphate + cellular proteinSide 2.. Part of the Sec protein translocase complex. Interacts with the SecYEG preprotein conducting channel. Has a central role in coupling the hydrolysis of ATP to the transfer of proteins into and across the cell membrane, serving as an ATP-driven molecular motor driving the stepwise translocation of polypeptide chains across the membrane. This chain is Protein translocase subunit SecA 1, found in Staphylococcus aureus (strain MRSA252).